The primary structure comprises 203 residues: Sperm-specific protein PHI-2B/PHI-3 (203 aa).

Residues 1–35 are compositionally biased toward basic residues; it reads MPSPSRKSRSRSRSRSKSPKRSPAKKARKTPKKPR. Disordered stretches follow at residues 1 to 46 and 104 to 203; these read MPSP…PSTL and KTSA…KSKK. The H15 domain maps to 41-120; that stretch reads KKPSTLSMIV…GATGSFRVGK (80 aa). Composition is skewed to basic residues over residues 126–140 and 147–203; these read KKAKKAKSPKKKSSK and KAKK…KSKK.

PL-II* and PL-IV are produced by post-translational cleavage of a common precursor. As to expression, sperm.

It localises to the nucleus. It is found in the chromosome. In terms of biological role, linker histones are implicated in chromatin remodeling and/or transcriptional regulation during spermiogenesis, the process of spermatid maturation into spermatozoa. Protamines substitute for histones in the chromatin of sperm during the haploid phase of spermatogenesis. They compact sperm DNA into a highly condensed, stable and inactive complex. The polypeptide is Sperm-specific protein PHI-2B/PHI-3 (Mytilus trossulus (Blue mussel)).